The sequence spans 469 residues: Probable ribonuclease FAU-1 (469 aa).

The protein belongs to the FAU-1 family.

In terms of biological role, probable RNase involved in rRNA stability through maturation and/or degradation of precursor rRNAs. Binds to RNA in loop regions with AU-rich sequences. This Ignicoccus hospitalis (strain KIN4/I / DSM 18386 / JCM 14125) protein is Probable ribonuclease FAU-1.